A 717-amino-acid polypeptide reads, in one-letter code: Glycine--tRNA ligase beta subunit (717 aa).

It belongs to the class-II aminoacyl-tRNA synthetase family. In terms of assembly, tetramer of two alpha and two beta subunits.

Its subcellular location is the cytoplasm. The enzyme catalyses tRNA(Gly) + glycine + ATP = glycyl-tRNA(Gly) + AMP + diphosphate. The chain is Glycine--tRNA ligase beta subunit from Gloeothece citriformis (strain PCC 7424) (Cyanothece sp. (strain PCC 7424)).